The following is a 318-amino-acid chain: Acetyl-coenzyme A carboxylase carboxyl transferase subunit alpha (318 aa).

The 255-residue stretch at 38-292 (KLEKRLAKLE…NKTITKSLHA (255 aa)) folds into the CoA carboxyltransferase C-terminal domain.

It belongs to the AccA family. In terms of assembly, acetyl-CoA carboxylase is a heterohexamer composed of biotin carboxyl carrier protein (AccB), biotin carboxylase (AccC) and two subunits each of ACCase subunit alpha (AccA) and ACCase subunit beta (AccD).

The protein localises to the cytoplasm. It carries out the reaction N(6)-carboxybiotinyl-L-lysyl-[protein] + acetyl-CoA = N(6)-biotinyl-L-lysyl-[protein] + malonyl-CoA. The protein operates within lipid metabolism; malonyl-CoA biosynthesis; malonyl-CoA from acetyl-CoA: step 1/1. In terms of biological role, component of the acetyl coenzyme A carboxylase (ACC) complex. First, biotin carboxylase catalyzes the carboxylation of biotin on its carrier protein (BCCP) and then the CO(2) group is transferred by the carboxyltransferase to acetyl-CoA to form malonyl-CoA. In Listeria innocua serovar 6a (strain ATCC BAA-680 / CLIP 11262), this protein is Acetyl-coenzyme A carboxylase carboxyl transferase subunit alpha.